A 364-amino-acid polypeptide reads, in one-letter code: Valine dehydrogenase (364 aa).

Lys-91 is a catalytic residue. 191–197 serves as a coordination point for NAD(+); the sequence is GVGKVGH.

This sequence belongs to the Glu/Leu/Phe/Val dehydrogenases family. In terms of assembly, homodimer.

Its subcellular location is the cytoplasm. The catalysed reaction is L-valine + NAD(+) + H2O = 3-methyl-2-oxobutanoate + NH4(+) + NADH + H(+). It functions in the pathway amino-acid degradation; L-valine degradation. Its activity is regulated as follows. Repressed in minimal medium by the presence of glucose and NH4(+), glycerol and NH4(+), or glycerol and asparagine. Its function is as follows. Oxidative deamination of branched-chain amino acids. Oxidizes L-valine and L-alpha-aminobutyric acid efficiently, and L-isoleucine and L-leucine less efficiently. Does not act on D-valine. The catabolism of L-valine is the major source of fatty acid precursors for macrolide biosynthesis and a vital source of antibiotic precursors. Uses NAD; no activity was found with NADP. In Streptomyces coelicolor (strain ATCC BAA-471 / A3(2) / M145), this protein is Valine dehydrogenase (vdh).